The chain runs to 274 residues: Insulin-like growth factor-binding protein-like 1 (274 aa).

The first 21 residues, 1–21 (MPRSPGLFLLLLVLQPLPALG), serve as a signal peptide directing secretion. The IGFBP N-terminal domain maps to 30–105 (RNPECGPCRP…PEGTGLCVCA (76 aa)). 7 disulfides stabilise this stretch: Cys34–Cys59, Cys37–Cys61, Cys42–Cys62, Cys48–Cys65, Cys73–Cys87, Cys81–Cys102, and Cys111–Cys147. The 59-residue stretch at 91–149 (AAGAAPEGTGLCVCAQRGSVCGSDGRSYPSVCALRLRARQAPRALPGHLHKARDGPCEF) folds into the Kazal-like domain. The region spanning 151-255 (PVVITPPQSV…GEAQSHGTVT (105 aa)) is the Ig-like C2-type domain. Asn162 carries N-linked (GlcNAc...) asparagine glycosylation. A disulfide bridge links Cys172 with Cys239.

It localises to the secreted. IGF-binding proteins prolong the half-life of IGFs and have been shown to either inhibit or stimulate the growth promoting effects of the IGFs in cell culture. They alter the interaction of IGFs with their cell surface receptors. The protein is Insulin-like growth factor-binding protein-like 1 (IGFBPL1) of Bos taurus (Bovine).